We begin with the raw amino-acid sequence, 490 residues long: ATP synthase subunit beta, chloroplastic (490 aa).

A Phosphothreonine modification is found at threonine 6. Phosphoserine is present on serine 13. 172 to 179 (GGAGVGKT) is a binding site for ATP.

The protein belongs to the ATPase alpha/beta chains family. As to quaternary structure, F-type ATPases have 2 components, CF(1) - the catalytic core - and CF(0) - the membrane proton channel. CF(1) has five subunits: alpha(3), beta(3), gamma(1), delta(1), epsilon(1). CF(0) has four main subunits: a(1), b(1), b'(1) and c(9-12).

It localises to the plastid. It is found in the chloroplast thylakoid membrane. The catalysed reaction is ATP + H2O + 4 H(+)(in) = ADP + phosphate + 5 H(+)(out). Its function is as follows. Produces ATP from ADP in the presence of a proton gradient across the membrane. The catalytic sites are hosted primarily by the beta subunits. This Aethionema grandiflorum (Persian stone-cress) protein is ATP synthase subunit beta, chloroplastic.